An 807-amino-acid polypeptide reads, in one-letter code: Carbamoyltransferase HypF2 (807 aa).

The region spanning Arg-14–Glu-101 is the Acylphosphatase-like domain. C4-type zinc fingers lie at residues Cys-120–Cys-145 and Cys-170–Cys-195. One can recognise a YrdC-like domain in the interval Val-212 to Gly-415. Residues Trp-663–Val-682 form a disordered region.

Belongs to the carbamoyltransferase HypF family.

It carries out the reaction C-terminal L-cysteinyl-[HypE protein] + carbamoyl phosphate + ATP + H2O = C-terminal S-carboxamide-L-cysteinyl-[HypE protein] + AMP + phosphate + diphosphate + H(+). The protein operates within protein modification; [NiFe] hydrogenase maturation. In terms of biological role, involved in the maturation of [NiFe] hydrogenases. Along with HypE, it catalyzes the synthesis of the CN ligands of the active site iron of [NiFe]-hydrogenases. HypF functions as a carbamoyl transferase using carbamoylphosphate as a substrate and transferring the carboxamido moiety in an ATP-dependent reaction to the thiolate of the C-terminal cysteine of HypE yielding a protein-S-carboxamide. The polypeptide is Carbamoyltransferase HypF2 (hypF2) (Cupriavidus necator (strain ATCC 17699 / DSM 428 / KCTC 22496 / NCIMB 10442 / H16 / Stanier 337) (Ralstonia eutropha)).